Consider the following 409-residue polypeptide: Phosphoserine phosphatase SerB2 (409 aa).

ACT domains lie at Leu-8–Asp-86 and Gly-102–Leu-174. Asp-185 functions as the Nucleophile in the catalytic mechanism. Residues Asp-185 and Asp-187 each contribute to the Mg(2+) site. Residue Asp-187 is the Proton donor of the active site. Residues Glu-194, Arg-230, Ser-273–Gly-274, and Lys-318 contribute to the substrate site. Asp-341 is a Mg(2+) binding site. Asn-344 contacts substrate.

This sequence belongs to the HAD-like hydrolase superfamily. SerB family. As to quaternary structure, homodimer. The dimeric population shifts to a tetramer in the presence of L-serine, which inactivates the enzyme. Mg(2+) is required as a cofactor. Mn(2+) serves as cofactor.

Its subcellular location is the secreted. It localises to the host cytoplasm. It is found in the host cytosol. It carries out the reaction O-phospho-L-serine + H2O = L-serine + phosphate. The catalysed reaction is O-phospho-D-serine + H2O = D-serine + phosphate. It catalyses the reaction O-phospho-L-seryl-[protein] + H2O = L-seryl-[protein] + phosphate. The enzyme catalyses O-phospho-L-threonyl-[protein] + H2O = L-threonyl-[protein] + phosphate. It functions in the pathway amino-acid biosynthesis; L-serine biosynthesis; L-serine from 3-phospho-D-glycerate: step 3/3. With respect to regulation, clofazimine, a drug being evaluated for XDR and MDR tuberculosis, inhibits SerB2 phosphatase activity and reverses the various functional effects described above and interactions with host proteins. Is inhibited by known PSP inhibitors such as chlorpromazine, DL-AP3 and sodium orthovanadate, but not by okadaic acid. By binding to the ACT domains, amino-acids have various effects on enzyme activity: L-serine and L-glycine act as inhibitors, whereas L-lysine, L-tyrosine and L-phenylalanine are activators. High throughput screen has been performed to identify specific PSP inhibitors with activity against intracellular bacteria; the two best hits identified in this screen, clorobiocin and rosaniline, are bactericidal and kill bacteria in infected macrophages in a dose-dependent manner. Its function is as follows. Catalyzes the dephosphorylation of O-phospho-L-serine into L-serine, a step in the L-serine biosynthetic pathway. Exhibits high specificity for L-phosphoserine compared to substrates like L-phosphothreonine (5% relative activity) and L-phosphotyrosine (1.7% relative activity). In the host, induces significant cytoskeleton rearrangements through cofilin dephosphorylation and its subsequent activation, and affects the expression of genes that regulate actin dynamics. It specifically interacts with HSP90, HSP70 and HSP27 that block apoptotic pathways but not with other HSPs. Also interacts with GAPDH. It actively dephosphorylates MAP kinase p38 and NF-kappa B p65 (specifically at Ser-536) that play crucial roles in inflammatory and immune responses. This in turn leads to down-regulation of Interleukin 8, a chemotactic and inflammatory cytokine. Thus might help the pathogen to evade the host's immune response. Exogenous addition of purified SerB2 protein to human THP-1 cells (that can be differentiated into macrophage-like cells) induces microtubule rearrangements; the phosphatase activity is co-related to the elicited rearrangements, while addition of the ACT-domains alone elicits no rearrangements. The sequence is that of Phosphoserine phosphatase SerB2 from Mycobacterium tuberculosis (strain ATCC 25618 / H37Rv).